The following is a 288-amino-acid chain: Bifunctional protein FolD (288 aa).

NADP(+) is bound by residues 164-166 (GTS) and isoleucine 230.

This sequence belongs to the tetrahydrofolate dehydrogenase/cyclohydrolase family. As to quaternary structure, homodimer.

The enzyme catalyses (6R)-5,10-methylene-5,6,7,8-tetrahydrofolate + NADP(+) = (6R)-5,10-methenyltetrahydrofolate + NADPH. The catalysed reaction is (6R)-5,10-methenyltetrahydrofolate + H2O = (6R)-10-formyltetrahydrofolate + H(+). The protein operates within one-carbon metabolism; tetrahydrofolate interconversion. In terms of biological role, catalyzes the oxidation of 5,10-methylenetetrahydrofolate to 5,10-methenyltetrahydrofolate and then the hydrolysis of 5,10-methenyltetrahydrofolate to 10-formyltetrahydrofolate. This Mycoplasma mycoides subsp. mycoides SC (strain CCUG 32753 / NCTC 10114 / PG1) protein is Bifunctional protein FolD.